A 146-amino-acid chain; its full sequence is Lysozyme C (146 aa).

Positions 1–16 are cleaved as a signal peptide; it reads SGKYISWEDSCSYLQL. The C-type lysozyme domain maps to 17–146; that stretch reads QKYERCELAK…LSQWTQGCKL (130 aa). 4 cysteine pairs are disulfide-bonded: cysteine 22/cysteine 144, cysteine 46/cysteine 132, cysteine 81/cysteine 97, and cysteine 93/cysteine 111. Active-site residues include glutamate 51 and aspartate 69.

It belongs to the glycosyl hydrolase 22 family. As to expression, expressed by the skin glands.

The protein resides in the secreted. It catalyses the reaction Hydrolysis of (1-&gt;4)-beta-linkages between N-acetylmuramic acid and N-acetyl-D-glucosamine residues in a peptidoglycan and between N-acetyl-D-glucosamine residues in chitodextrins.. Its function is as follows. Lysozymes have primarily a bacteriolytic function; those in tissues and body fluids are associated with the monocyte-macrophage system and enhance the activity of immunoagents. Has antibacterial activity against the Gram-positive bacterium S.aureus and against the Gram-negative bacterium E.coli with a MIC of 1 uM and 8 uM respectively. No antifungal activity against C.albicans. This Bufo gargarizans andrewsi (Andrew's toad) protein is Lysozyme C.